The chain runs to 117 residues: Protein RALF-like 27 (117 aa).

Residues 1-27 form the signal peptide; the sequence is MTKTFFSFSFFFTSSLLLLLAATSATA. The propeptide at 28–71 is removed in mature form; that stretch reads STGNVTSGLRYDGCAPGDTVGECITATVEEEDEEGVEAVVRRIL. The N-linked (GlcNAc...) asparagine glycan is linked to Asn-31. 2 cysteine pairs are disulfide-bonded: Cys-88–Cys-96 and Cys-107–Cys-113.

This sequence belongs to the plant rapid alkalinization factor (RALF) family.

The protein localises to the secreted. Cell signaling peptide that may regulate plant stress, growth, and development. Mediates a rapid alkalinization of extracellular space by mediating a transient increase in the cytoplasmic Ca(2+) concentration leading to a calcium-dependent signaling events through a cell surface receptor and a concomitant activation of some intracellular mitogen-activated protein kinases. This chain is Protein RALF-like 27 (RALFL27), found in Arabidopsis thaliana (Mouse-ear cress).